The following is a 24-amino-acid chain: Xenoposin-precursor fragment B1 (24 aa).

Expressed by the skin glands.

It localises to the secreted. Its function is as follows. Has antibacterial activity. In Xenopus borealis (Kenyan clawed frog), this protein is Xenoposin-precursor fragment B1.